We begin with the raw amino-acid sequence, 311 residues long: tRNA-cytidine(32) 2-sulfurtransferase (311 aa).

A PP-loop motif motif is present at residues 47–52; that stretch reads SGGKDS. [4Fe-4S] cluster-binding residues include Cys122, Cys125, and Cys213.

It belongs to the TtcA family. As to quaternary structure, homodimer. It depends on Mg(2+) as a cofactor. [4Fe-4S] cluster serves as cofactor.

The protein localises to the cytoplasm. It catalyses the reaction cytidine(32) in tRNA + S-sulfanyl-L-cysteinyl-[cysteine desulfurase] + AH2 + ATP = 2-thiocytidine(32) in tRNA + L-cysteinyl-[cysteine desulfurase] + A + AMP + diphosphate + H(+). Its pathway is tRNA modification. Functionally, catalyzes the ATP-dependent 2-thiolation of cytidine in position 32 of tRNA, to form 2-thiocytidine (s(2)C32). The sulfur atoms are provided by the cysteine/cysteine desulfurase (IscS) system. This chain is tRNA-cytidine(32) 2-sulfurtransferase, found in Salmonella heidelberg (strain SL476).